Reading from the N-terminus, the 327-residue chain is Aspartate--ammonia ligase (327 aa).

The protein belongs to the class-II aminoacyl-tRNA synthetase family. AsnA subfamily.

The protein resides in the cytoplasm. It carries out the reaction L-aspartate + NH4(+) + ATP = L-asparagine + AMP + diphosphate + H(+). It functions in the pathway amino-acid biosynthesis; L-asparagine biosynthesis; L-asparagine from L-aspartate (ammonia route): step 1/1. In Bacillus cereus (strain AH820), this protein is Aspartate--ammonia ligase.